We begin with the raw amino-acid sequence, 206 residues long: MEFSSKLLEKAVNEMAQLPGIGKRTALRLVLYLLKQPKDRTDFLAQSLLTMREGIIFCENCHNISDVAVCEICSNKNRNHQIVCVVEDVRDVMAIENTGQFRGVYHVLGGKISPIDGVGPSQLNISSLVEKVKSGSVSEIIFALSSTMEGDTTNFYIYKQIKDCEIITSSIARGISVGDELEYADEVTLGRSILNRIPFENSFKNN.

The C4-type zinc finger occupies 58-73 (CENCHNISDVAVCEIC). The Toprim domain occupies 81–176 (QIVCVVEDVR…ITSSIARGIS (96 aa)).

Belongs to the RecR family.

Its function is as follows. May play a role in DNA repair. It seems to be involved in an RecBC-independent recombinational process of DNA repair. It may act with RecF and RecO. In Flavobacterium psychrophilum (strain ATCC 49511 / DSM 21280 / CIP 103535 / JIP02/86), this protein is Recombination protein RecR.